We begin with the raw amino-acid sequence, 1299 residues long: MSSESSFGLMQIGLATAEDIRGWSYGEVKKPETINYRTLKPEKDGLFCEKIFGPSRDWECYCGKYKRVRFKGIICERCGVEVTRAKVRRERMGHIELAAPVTHIWYFKGVPSRLGYLLDLAPKDLEKVIYFAAYMITSVDEAARHEELPNLQVEHDIEKKQLIDNRDGDIAAIARDLEGEIARLEGEGAKAADKKKARDSADRQMANVRKRADADIERLEQVWDRFKNLKVADLEGDEGLYRELRDRYGMYFEGSMGAEAIKKRLEGFDMQAESDLLRDIIANGKGQRKTRALKRLKVVNAFLTTNNSPLGMVLDAVPVIPPELRPMVQLDGGRFATSDLNDLYRRVINRNNRLKRLLDLGAPEIIVNNEKRMLQEAVDSLFDNGRRGRPVTGPGNRPLKSLSDMLKGKQGRFRQNLLGKRVDYSGRSVIVVGPQLKLHQCGLPKQMALELFKPFVMKRLVDLNHAQNIKSAKRMVERYRPQVWDVLEEIITEHPVLLNRAPTLHRLGIQAFEPQLVEGKAIQLHPLVCGAFNADFDGDQMAVHLPLSPEAQAEARILMLSSNNILKPSDGRPVTLPSQDMIIGLYHLTTKRKGSAGEGRIFGSVSEAIMAFDARDLHLNSQVKIRLEGFVPYSGWEAPEGWEQGQPAIVETSLGQVLFNETLPADYPWVEAVADKGELSRIVNDLAERYPKVVTAATLDNLKDAGFYWATRSGVTVAISDIEVPAAKPEILAGYEERAAKIQGQYDKGLIDDDERRQELIEIWNKATNDIAAVMRESLSPMNTINRMVSSGARGNWMQVRQIAGIRGLVANPKGEIIPRPIKSSYREGLSVLEYFIATHGARKGLADTALRTANSGYLTRRLVDVSQDVIVREEDCGTERGLVTPIAVADSNGELVLDENVENSAYARTLAVDVVDSEGNVLAAAGTDCGDVVIDELFKAGITEVKVRSVLTCESSVGTCALCYGRSLATGKTVDIGEAVGIIAAQSIGEPGTQLTMRTFHTGGAVSAGGGDDITQGLPRIQELFEARTPKGVAPIAEAAGRITIEESERQMRLVITPDDGTEEIAYPVLRRSRLLIEDGDHVTVGQKLINGPVDPKQVLRIMGPRAAQKFLVDEVQGVYRSQGIGIHDKHVEVIVRQMLRRVTVIESGESDLLPGELAERSRFEDANRRVVSEGKAPASGRPELMGITKASLATESWLSAASFQETTRVLTQAAMEGKSDPLLGLKENVIIGKLIPAGTGLPRYTEVTVEPTEEAKANLFTGPSAFSDFSYDTLGGDGAPEFHAIPLDDYDLGNDFR.

Residues cysteine 60, cysteine 62, cysteine 75, and cysteine 78 each coordinate Zn(2+). The Mg(2+) site is built by aspartate 535, aspartate 537, and aspartate 539. 4 residues coordinate Zn(2+): cysteine 877, cysteine 954, cysteine 961, and cysteine 964.

The protein belongs to the RNA polymerase beta' chain family. In terms of assembly, the RNAP catalytic core consists of 2 alpha, 1 beta, 1 beta' and 1 omega subunit. When a sigma factor is associated with the core the holoenzyme is formed, which can initiate transcription. It depends on Mg(2+) as a cofactor. Zn(2+) serves as cofactor.

It carries out the reaction RNA(n) + a ribonucleoside 5'-triphosphate = RNA(n+1) + diphosphate. In terms of biological role, DNA-dependent RNA polymerase catalyzes the transcription of DNA into RNA using the four ribonucleoside triphosphates as substrates. This is DNA-directed RNA polymerase subunit beta' from Pseudarthrobacter chlorophenolicus (strain ATCC 700700 / DSM 12829 / CIP 107037 / JCM 12360 / KCTC 9906 / NCIMB 13794 / A6) (Arthrobacter chlorophenolicus).